Here is a 276-residue protein sequence, read N- to C-terminus: MKGQILREMKVLNAIDPGFEVQRRVAFIKSKLKQSSTSTLVLGISGGVDSSLAGRLCQLAVDELNSDASGNHYQFIAVRLPYDVQKDEDEAQLACQFIQPSKQVTVNVKQGVDGVHCETLAAVEAAGIALPEADKIDFVKGNVKARMRMVAQYEIAGLVAGLVVGTDHSAENITGFYTKWGDGACDLAPLFGLNKRQVRQLAAFLGAPDKLVIKAPTADLEENKPQLEDEVALGLTYEQIDDFLEGKEVSEFVNDKLVGIYRATQHKREPIPTIYD.

Gly-43 to Ser-50 contributes to the ATP binding site. A Mg(2+)-binding site is contributed by Asp-49. Arg-146 is a binding site for deamido-NAD(+). Thr-166 provides a ligand contact to ATP. Glu-171 serves as a coordination point for Mg(2+). 2 residues coordinate deamido-NAD(+): Lys-179 and Asp-186. Positions 195 and 217 each coordinate ATP. His-266–Lys-267 contacts deamido-NAD(+).

This sequence belongs to the NAD synthetase family. Homodimer.

The enzyme catalyses deamido-NAD(+) + NH4(+) + ATP = AMP + diphosphate + NAD(+) + H(+). It functions in the pathway cofactor biosynthesis; NAD(+) biosynthesis; NAD(+) from deamido-NAD(+) (ammonia route): step 1/1. Functionally, catalyzes the ATP-dependent amidation of deamido-NAD to form NAD. Uses ammonia as a nitrogen source. This is NH(3)-dependent NAD(+) synthetase from Shewanella pealeana (strain ATCC 700345 / ANG-SQ1).